The following is a 52-amino-acid chain: UPF0057 membrane protein PA0567 (52 aa).

2 helical membrane-spanning segments follow: residues I6–A26 and L29–I49.

It belongs to the UPF0057 (PMP3) family.

It localises to the cell membrane. The sequence is that of UPF0057 membrane protein PA0567 from Pseudomonas aeruginosa (strain ATCC 15692 / DSM 22644 / CIP 104116 / JCM 14847 / LMG 12228 / 1C / PRS 101 / PAO1).